The sequence spans 836 residues: MDSTKEEEDLNNNIDEISDGENEEEELDEAIAAALQKIEVPSIPRRVKVYEMEDENWVDCGTGYCDGKIEGPLAYFIVRSEADNETILLKTQLIAEDIYSRQEETLIVWQELNGTDLALSFQESSGCIDMWMFLANVQKAISSVTRSYSNDDILTDEGALNENYLNTVDLPAPELANLKEIEEAVYGYMQSIQSRDSLVRYVSNENYIDRLIELFPLCEDLENTDDLHRLCSIIKSFVQLNDAPLLESLFSNDEKLMCVAGILEYDPEFPNIKANHREYLMDSKKFKQVVPIQDPRILAKIHQTFKLQYLRDVVVSRIVDEPSFSVLNSFIFFNQADIIQYLQTNEKFLHELFSIYVNEGEDDQRKQDGIFFIQQVCNIAKGLQFQSCSALFATFVKFNLLKALDYAMSHENNSVRNAGSDILVSIIDHEPAIVWQKFDQDRKDASSSLSNAHVSQHSLLSNLINILHKESNPGVLAQISEAFKMLLSLPGSYAYNNPYRNADGNVRNKTDNIIGINFIENFYDNSFNMLAAPLLELENVSSLDVKKLDMYMHLCELFCYFFRIHDYWSRRFDTYKTLTSKVALLLYSDRKYVVLSALRFIRSCLAARQSEMSLIMLETDTYGKVLDLMLKVKDQTNLVNSAALEFFEFLRSEGSEDTLDYLNKNYRPQLESLNNLSTFSELLNIIDGLSSDSRSPKTVGTHESNSYEFDGASNNNQRVGDDVSKDWEIQQDFSIENDTELSEKVGQRTVLDSIAPAELNIEDSCEQPKQPILEDRYFLESAVYDTSAESSGINVSNTRYSKRKSDFQVDDQQADDESPKKRLSIDSSSAQNGYAS.

3 disordered regions span residues 1-25 (MDST…NEEE), 692-718 (DSRS…NNQR), and 789-836 (ESSG…GYAS). Composition is skewed to polar residues over residues 789 to 799 (ESSGINVSNTR) and 825 to 836 (IDSSSAQNGYAS).

It is found in the nucleus. This is an uncharacterized protein from Schizosaccharomyces pombe (strain 972 / ATCC 24843) (Fission yeast).